The sequence spans 455 residues: 23S rRNA (uracil(1939)-C(5))-methyltransferase RlmD (455 aa).

Residues 12 to 70 (SKQLSAKLSLSVTQLDHLGAGIAQHQGKIVFIPGVLPGETATVQFVEQKKSYAKAKLIS) form the TRAM domain. Cys-83, Cys-89, Cys-92, and Cys-174 together coordinate [4Fe-4S] cluster. Residues Gln-288, Phe-317, Asn-322, Glu-338, Asp-365, and Asp-385 each contribute to the S-adenosyl-L-methionine site. The Nucleophile role is filled by Cys-411.

This sequence belongs to the class I-like SAM-binding methyltransferase superfamily. RNA M5U methyltransferase family. RlmD subfamily.

It carries out the reaction uridine(1939) in 23S rRNA + S-adenosyl-L-methionine = 5-methyluridine(1939) in 23S rRNA + S-adenosyl-L-homocysteine + H(+). Its function is as follows. Catalyzes the formation of 5-methyl-uridine at position 1939 (m5U1939) in 23S rRNA. The protein is 23S rRNA (uracil(1939)-C(5))-methyltransferase RlmD of Shewanella frigidimarina (strain NCIMB 400).